A 487-amino-acid chain; its full sequence is uncharacterized protein (487 aa).

This is an uncharacterized protein from Bacillus subtilis (strain 168).